The chain runs to 842 residues: uncharacterized protein (842 aa).

Disordered stretches follow at residues 1 to 20 (MLHF…SPKE) and 142 to 209 (NSSS…TSSS). Positions 35 to 422 (TKDVTFRLVL…TAKSFHKCIL (388 aa)) constitute a uDENN FNIP1/2-type domain. Over residues 183-209 (ANLSSSSKNMKDSTLSSQKARSNTSSS) the composition is skewed to polar residues. Positions 430 to 772 (APLIKPSVFS…CYEIHEFPSE (343 aa)) constitute a cDENN FNIP1/2-type domain. Residues Ser573 and Ser590 each carry the phosphoserine modification. In terms of domain architecture, dDENN FNIP1/2-type spans 777 to 842 (YAPFLLKEHH…KEVLRVCSHC (66 aa)).

Its subcellular location is the cytoplasm. This is an uncharacterized protein from Schizosaccharomyces pombe (strain 972 / ATCC 24843) (Fission yeast).